Consider the following 280-residue polypeptide: UPF0276 protein NGO_1946 (280 aa).

Belongs to the UPF0276 family.

This is UPF0276 protein NGO_1946 from Neisseria gonorrhoeae (strain ATCC 700825 / FA 1090).